Here is a 278-residue protein sequence, read N- to C-terminus: S-formylglutathione hydrolase YeiG (278 aa).

Active-site charge relay system residues include S145, D223, and H256.

This sequence belongs to the esterase D family.

It catalyses the reaction S-formylglutathione + H2O = formate + glutathione + H(+). Its function is as follows. Serine hydrolase involved in the detoxification of formaldehyde. Hydrolyzes S-formylglutathione to glutathione and formate. The sequence is that of S-formylglutathione hydrolase YeiG (yeiG) from Escherichia coli O139:H28 (strain E24377A / ETEC).